Here is an 887-residue protein sequence, read N- to C-terminus: Dystrophin-like protein 1 (887 aa).

The PID domain maps to 30 to 197 (YQHGIHFEAK…KISMQSEDEA (168 aa)). 2 stretches are compositionally biased toward basic and acidic residues: residues 176–186 (MQEKHEDEAAK) and 205–216 (IEERGGREEDSR). Disordered regions lie at residues 176 to 254 (MQEK…GTAI), 506 to 606 (EIHH…QYER), 641 to 753 (QFDM…KNTA), 804 to 839 (IAEEPEPSEMDPNRNNLPSSTNSSMKRRGFLPPPNT), and 853 to 887 (NVDRSKLPETSLLTRLTRQAQGDNSLGNLPNGYPQ). The span at 242 to 254 (KPSTTSSSGGTAI) shows a compositional bias: polar residues. Positions 434–506 (QLMRSQLDQA…QMLETKITSE (73 aa)) form a coiled coil. Residues 510-519 (SSSQPPQHQP) show a composition bias toward low complexity. The span at 573-588 (KESKERRKDEGTRTEP) shows a compositional bias: basic and acidic residues. Polar residues predominate over residues 597 to 606 (DYSSSDQYER). Polar residues-rich tracts occupy residues 816–827 (NRNNLPSSTNSS) and 863–887 (SLLTRLTRQAQGDNSLGNLPNGYPQ).

As to quaternary structure, component of the dystrophin glycoprotein complex (DGC). Interacts with zyx-1. In terms of tissue distribution, expressed in muscles of the head, body wall and vulva. In some animals, weaker expression is observed in the intestinal muscles (at protein level). Isoform a is expressed in lateral neurons SDQL and SDQR.

Its function is as follows. Together with dys-1 and hlh-1, participates in a common muscular function. This Caenorhabditis elegans protein is Dystrophin-like protein 1.